The chain runs to 272 residues: Orotidine 5'-phosphate decarboxylase (272 aa).

The active-site Proton donor is the Lys95.

The protein belongs to the OMP decarboxylase family. Type 2 subfamily.

The catalysed reaction is orotidine 5'-phosphate + H(+) = UMP + CO2. It functions in the pathway pyrimidine metabolism; UMP biosynthesis via de novo pathway; UMP from orotate: step 2/2. In Cupriavidus necator (strain ATCC 17699 / DSM 428 / KCTC 22496 / NCIMB 10442 / H16 / Stanier 337) (Ralstonia eutropha), this protein is Orotidine 5'-phosphate decarboxylase.